We begin with the raw amino-acid sequence, 430 residues long: Glial fibrillary acidic protein (430 aa).

A disordered region spans residues 1 to 31 (MERRRITSARRSYASSETMVRGHGPTRHLGT). The tract at residues 1–70 (MERRRITSAR…KETRASERAE (70 aa)) is head. T7 carries the post-translational modification Phosphothreonine; by AURKB and ROCK1. The segment covering 9-18 (ARRSYASSET) has biased composition (polar residues). Omega-N-methylarginine is present on R11. Residue S12 is modified to Phosphoserine. At R21 the chain carries Omega-N-methylarginine. R34 carries the post-translational modification Citrulline. S36 is subject to Phosphoserine; by AURKB and ROCK1. T41 carries the post-translational modification Phosphothreonine. The 309-residue stretch at 67–375 (ERAEMMELND…KLLEGEENRI (309 aa)) folds into the IF rod domain. Positions 71–102 (MMELNDRFASYIEKVRFLEQQNKALAAELNQL) are coil 1A. S80 carries the post-translational modification Phosphoserine. The segment at 103 to 113 (RAKEPTKLADV) is linker 1. Phosphothreonine is present on residues T108 and T148. Residues 114–212 (YQAELRELRL…EEEVRELQEQ (99 aa)) are coil 1B. The linker 12 stretch occupies residues 213 to 228 (LAQQQVHVEMDVAKPD). The segment at 229-250 (LTAALREIRTQYEAVATSNMQE) is coil 2A. Residues 251–254 (TEEW) form a linker 2 region. Positions 255–375 (YRSKFADLTD…KLLEGEENRI (121 aa)) are coil 2B. S267 is subject to Phosphoserine. R268 carries the post-translational modification Citrulline. Position 321 is a phosphoserine (S321). The tail stretch occupies residues 376–430 (TIPVQTFSNLQIRETSLDTKSVSEGHLKRNIVVKTVEMRDGEVIKESKQEHKDVM). T381 is subject to Phosphothreonine. The residue at position 383 (S383) is a Phosphoserine. Residues R404 and R414 each carry the citrulline modification.

Belongs to the intermediate filament family. As to quaternary structure, interacts with SYNM. In terms of assembly, interacts with PSEN1 (via N-terminus). Post-translationally, phosphorylated by PKN1. Expressed in the cortex and hippocampus. Expression decreases following acute and chronic corticosterone treatment.

Its subcellular location is the cytoplasm. In terms of biological role, GFAP, a class-III intermediate filament, is a cell-specific marker that, during the development of the central nervous system, distinguishes astrocytes from other glial cells. The sequence is that of Glial fibrillary acidic protein (Gfap) from Rattus norvegicus (Rat).